A 919-amino-acid chain; its full sequence is MKFKTVQEIARLYTNYFQDKGHTIVPSSSLIPKGDPTLLFTTAGMVQFKPLFTGAVELPYTRAASVQKCVRTTDLEVVGKTERHCTFFEMLGNFSFGDYFKKEAIEYALDFSLNHLEIPKDKIWVTIYLDDDEAKKFWMDLGIPEERIVRLGKKDNFWGPAGDSGACGPCSELYLDRGPEKGGPTCGNNPNCKPGCDCDRYLEYWNLVFNQFNQTVSGELLPLKQTGIDTGSGLERVAMLLQEVDSVYDTDELKSIIKQIEILSGYKYDETTKQSFRVITDHSRSVFFSLGDGIYPDRTGRGYVIRRLIRRASLFARKLGIHEPFLYKLVSTLKDLYSLRYPELKDKAKDIESILKKEEELFLHTLEVGLEELETVLEHLKKEKQTVVTGKEGFRLYSTYGFPREMTKELVEERGFSFDDKGFEEELEKDRYLSRASWKGKKIQYLTGFSASPELKTEFLGYTETKAKSRVLHLFVDGKSVTSTKQGEEAVIVLDKTPFYAEGGGQIGDTGYLKKEGFQFQVQDTQKENDTFLHMGMILKGNLSVGDVVDSEIEVERRQNLANHHSGTHLLNGALRRILGSHVTQKGSIVSADYLRFDFSHPKALSKEEIIQIETDVNEAVSANIPVKTEVLEIGQAKESGALSMFDEKYGSVVRVISMGDKSKEFCGGTHVSNTKEIGFFAIVKEGSPGAGNRRIEAICGESVVNYFLHQFQTLASKIETHNLSAKETFGDLKEFGITKEVPSPEILQTMFHQDGKEVVTRLRKLREELEIELEEKSSALFKAKKKREQKEFQMNPELVDGLLQKAHHFPKGKVVTEVFPSVDAKSLKDLADSLKAKEPEILCLFGTTEGESSTLVFMCNKVLNERGIHCGDILKETLVMLDGKGGGRPDMAQGGGKKPESVAKSLEFALSLAKIKLS.

Zn(2+) is bound by residues H565, H569, C667, and H671.

This sequence belongs to the class-II aminoacyl-tRNA synthetase family. It depends on Zn(2+) as a cofactor.

It localises to the cytoplasm. The enzyme catalyses tRNA(Ala) + L-alanine + ATP = L-alanyl-tRNA(Ala) + AMP + diphosphate. Functionally, catalyzes the attachment of alanine to tRNA(Ala) in a two-step reaction: alanine is first activated by ATP to form Ala-AMP and then transferred to the acceptor end of tRNA(Ala). Also edits incorrectly charged Ser-tRNA(Ala) and Gly-tRNA(Ala) via its editing domain. This is Alanine--tRNA ligase from Leptospira biflexa serovar Patoc (strain Patoc 1 / Ames).